The primary structure comprises 252 residues: 3-dehydroquinate dehydratase (252 aa).

Residues 46-48 and R82 each bind 3-dehydroquinate; that span reads EWR. The active-site Proton donor/acceptor is the H143. Residue K170 is the Schiff-base intermediate with substrate of the active site. 3-dehydroquinate contacts are provided by R212, S231, and Q235.

It belongs to the type-I 3-dehydroquinase family. Homodimer.

It catalyses the reaction 3-dehydroquinate = 3-dehydroshikimate + H2O. It participates in metabolic intermediate biosynthesis; chorismate biosynthesis; chorismate from D-erythrose 4-phosphate and phosphoenolpyruvate: step 3/7. Functionally, involved in the third step of the chorismate pathway, which leads to the biosynthesis of aromatic amino acids. Catalyzes the cis-dehydration of 3-dehydroquinate (DHQ) and introduces the first double bond of the aromatic ring to yield 3-dehydroshikimate. This chain is 3-dehydroquinate dehydratase, found in Listeria innocua serovar 6a (strain ATCC BAA-680 / CLIP 11262).